Consider the following 305-residue polypeptide: Ribonuclease BN (305 aa).

Positions 64, 66, 68, 69, 141, 212, and 270 each coordinate Zn(2+). The active-site Proton acceptor is the aspartate 68.

The protein belongs to the RNase Z family. RNase BN subfamily. In terms of assembly, homodimer. Zn(2+) is required as a cofactor.

Functionally, zinc phosphodiesterase, which has both exoribonuclease and endoribonuclease activities. This is Ribonuclease BN from Citrobacter koseri (strain ATCC BAA-895 / CDC 4225-83 / SGSC4696).